The sequence spans 185 residues: Putative manganese efflux pump MntP (185 aa).

The next 6 membrane-spanning stretches (helical) occupy residues 6–26 (IFIISVALAMDAFTIAVACGL), 41–61 (FHFGLFQALMPLLGWLAGLTV), 65–85 (VETYAPWISFFLLAFVGGKMI), 107–127 (LVFLSVATSLDALAVGLSFSI), 132–152 (IAFPCVMIGITALVLTSFGLW), and 164–184 (SHIAERIGGVVLILIGLKLLL).

The protein belongs to the MntP (TC 9.B.29) family.

It localises to the cell inner membrane. Its function is as follows. Probably functions as a manganese efflux pump. The protein is Putative manganese efflux pump MntP of Maridesulfovibrio salexigens (strain ATCC 14822 / DSM 2638 / NCIMB 8403 / VKM B-1763) (Desulfovibrio salexigens).